An 88-amino-acid polypeptide reads, in one-letter code: Large ribosomal subunit protein bL27 (88 aa).

This sequence belongs to the bacterial ribosomal protein bL27 family.

In Mycolicibacterium vanbaalenii (strain DSM 7251 / JCM 13017 / BCRC 16820 / KCTC 9966 / NRRL B-24157 / PYR-1) (Mycobacterium vanbaalenii), this protein is Large ribosomal subunit protein bL27.